The chain runs to 135 residues: ATP synthase epsilon chain (135 aa).

The protein belongs to the ATPase epsilon chain family. As to quaternary structure, F-type ATPases have 2 components, CF(1) - the catalytic core - and CF(0) - the membrane proton channel. CF(1) has five subunits: alpha(3), beta(3), gamma(1), delta(1), epsilon(1). CF(0) has three main subunits: a, b and c.

Its subcellular location is the cell inner membrane. Functionally, produces ATP from ADP in the presence of a proton gradient across the membrane. This is ATP synthase epsilon chain from Brucella abortus (strain S19).